The following is a 197-amino-acid chain: Nucleoside triphosphate pyrophosphatase (197 aa).

The active-site Proton acceptor is Asp-71.

The protein belongs to the Maf family. A divalent metal cation is required as a cofactor.

The protein resides in the cytoplasm. The enzyme catalyses a ribonucleoside 5'-triphosphate + H2O = a ribonucleoside 5'-phosphate + diphosphate + H(+). It carries out the reaction a 2'-deoxyribonucleoside 5'-triphosphate + H2O = a 2'-deoxyribonucleoside 5'-phosphate + diphosphate + H(+). In terms of biological role, nucleoside triphosphate pyrophosphatase. May have a dual role in cell division arrest and in preventing the incorporation of modified nucleotides into cellular nucleic acids. The chain is Nucleoside triphosphate pyrophosphatase from Synechococcus sp. (strain JA-2-3B'a(2-13)) (Cyanobacteria bacterium Yellowstone B-Prime).